Reading from the N-terminus, the 647-residue chain is Putative pre-mRNA-splicing factor ATP-dependent RNA helicase C20H4.09 (647 aa).

A Helicase ATP-binding domain is found at 35-199 (LYAVEQNQIT…FGQDKVCTMS (165 aa)). An ATP-binding site is contributed by 48-55 (GHTGCGKT). A DEAH box motif is present at residues 146–149 (DEVH). In terms of domain architecture, Helicase C-terminal spans 219 to 398 (YVDSAIETVI…PLVLFLKGLG (180 aa)).

This sequence belongs to the DEAD box helicase family. DEAH subfamily.

It is found in the nucleus. It carries out the reaction ATP + H2O = ADP + phosphate + H(+). In terms of biological role, pre-mRNA processing factor involved in disassembly of spliceosomes after the release of mature mRNA. The sequence is that of Putative pre-mRNA-splicing factor ATP-dependent RNA helicase C20H4.09 from Schizosaccharomyces pombe (strain 972 / ATCC 24843) (Fission yeast).